The chain runs to 415 residues: Dibenzothiophene monooxygenase (415 aa).

FMN contacts are provided by residues Tyr94, 127–132 (NASSEN), 157–161 (KHFSS), Arg280, 365–366 (IG), and Thr387. The lid loop stretch occupies residues 129–140 (SSENNSHILDWK).

Belongs to the DszC flavin monooxygenase family. As to quaternary structure, homotetramer.

It localises to the cytoplasm. It catalyses the reaction dibenzothiophene + 2 FMNH2 + 2 O2 = dibenzothiophene 5,5-dioxide + 2 FMN + 2 H2O + 2 H(+). The enzyme catalyses dibenzothiophene + FMNH2 + O2 = dibenzothiophene 5-oxide + FMN + H2O + H(+). It carries out the reaction dibenzothiophene 5-oxide + FMNH2 + O2 = dibenzothiophene 5,5-dioxide + FMN + H2O + H(+). The protein operates within sulfur metabolism; dibenzothiophene degradation. With respect to regulation, inhibited at high concentrations of FMN or FAD. Catalyzes the first step of the '4S' desulfurization pathway that removes covalently bound sulfur from dibenzothiophene (DBT) without breaking carbon-carbon bonds. Sulfur dioxygenase which converts DBT to DBT-sulfone (DBTO2 or DBT 5,5-dioxide) probably in a stepwise manner. In addition to FMNH2 can also use FAD (although FAD is less efficient). The polypeptide is Dibenzothiophene monooxygenase (Mycolicibacterium goodii (Mycobacterium goodii)).